The chain runs to 391 residues: Nicotinate phosphoribosyltransferase (391 aa).

His-216 is modified (phosphohistidine; by autocatalysis).

The protein belongs to the NAPRTase family. In terms of processing, transiently phosphorylated on a His residue during the reaction cycle. Phosphorylation strongly increases the affinity for substrates and increases the rate of nicotinate D-ribonucleotide production. Dephosphorylation regenerates the low-affinity form of the enzyme, leading to product release.

The catalysed reaction is nicotinate + 5-phospho-alpha-D-ribose 1-diphosphate + ATP + H2O = nicotinate beta-D-ribonucleotide + ADP + phosphate + diphosphate. Its pathway is cofactor biosynthesis; NAD(+) biosynthesis; nicotinate D-ribonucleotide from nicotinate: step 1/1. Functionally, catalyzes the synthesis of beta-nicotinate D-ribonucleotide from nicotinate and 5-phospho-D-ribose 1-phosphate at the expense of ATP. The chain is Nicotinate phosphoribosyltransferase from Bordetella petrii (strain ATCC BAA-461 / DSM 12804 / CCUG 43448).